We begin with the raw amino-acid sequence, 91 residues long: Large ribosomal subunit protein bL31B (91 aa).

It belongs to the bacterial ribosomal protein bL31 family. Type B subfamily. In terms of assembly, part of the 50S ribosomal subunit.

The sequence is that of Large ribosomal subunit protein bL31B from Neisseria gonorrhoeae (strain NCCP11945).